Consider the following 440-residue polypeptide: Xylose isomerase (440 aa).

Active-site residues include His100 and Asp103. Residues Glu231, Glu267, His270, Asp295, Asp306, Asp308, and Asp338 each coordinate Mg(2+).

The protein belongs to the xylose isomerase family. As to quaternary structure, homotetramer. It depends on Mg(2+) as a cofactor.

The protein localises to the cytoplasm. It carries out the reaction alpha-D-xylose = alpha-D-xylulofuranose. The polypeptide is Xylose isomerase (Burkholderia cenocepacia (strain HI2424)).